A 298-amino-acid polypeptide reads, in one-letter code: Putative enoyl-CoA reductase (298 aa).

A run of 4 helical transmembrane segments spans residues 162-182 (CVYY…PYYT), 189-209 (LVNA…AVHV), 229-249 (ILFS…WVAF), and 254-274 (SMLT…EWAV).

It belongs to the steroid 5-alpha reductase family.

The protein resides in the membrane. Its pathway is lipid metabolism; fatty acid biosynthesis. In terms of biological role, involved in the synthesis of fatty acids. This Trypanosoma brucei brucei (strain 927/4 GUTat10.1) protein is Putative enoyl-CoA reductase.